The primary structure comprises 921 residues: Probable TonB-dependent receptor NMB1497 (921 aa).

Residues 1–25 (MRSSFRLKPICFYLMGVTLYHYSYA) form the signal peptide. Residues 53 to 174 (DKKVFTDARA…LAGSANLRTL (122 aa)) enclose the TBDR plug domain. Residues 185 to 921 (TYGLLLKGLT…TFLMTMSYKF (737 aa)) enclose the TBDR beta-barrel domain. Positions 904–921 (LTNFARGRTFLMTMSYKF) match the TonB C-terminal box motif.

This sequence belongs to the TonB-dependent receptor family.

Its subcellular location is the cell outer membrane. In terms of biological role, probable receptor, TonB-dependent. The sequence is that of Probable TonB-dependent receptor NMB1497 from Neisseria meningitidis serogroup B (strain ATCC BAA-335 / MC58).